A 57-amino-acid polypeptide reads, in one-letter code: Small ribosomal subunit protein bS21 (57 aa).

Residues 32–57 (VRKRKHFEKPSVKRKKKSEAARKRKF) are disordered. Residues 33–57 (RKRKHFEKPSVKRKKKSEAARKRKF) show a composition bias toward basic residues.

The protein belongs to the bacterial ribosomal protein bS21 family.

The sequence is that of Small ribosomal subunit protein bS21 from Shouchella clausii (strain KSM-K16) (Alkalihalobacillus clausii).